The chain runs to 176 residues: Nucleoside triphosphate/diphosphate phosphatase (176 aa).

Arg-23 functions as the Proton donor in the catalytic mechanism. Residues Asn-87, Asp-103, Asp-105, Asp-107, Asp-120, and Glu-123 each contribute to the Mg(2+) site.

The protein belongs to the Ntdp family. Mg(2+) is required as a cofactor.

It carries out the reaction a ribonucleoside 5'-triphosphate + H2O = a ribonucleoside 5'-diphosphate + phosphate + H(+). It catalyses the reaction a ribonucleoside 5'-diphosphate + H2O = a ribonucleoside 5'-phosphate + phosphate + H(+). Its function is as follows. Has nucleoside phosphatase activity towards nucleoside triphosphates and nucleoside diphosphates. The protein is Nucleoside triphosphate/diphosphate phosphatase of Lactococcus lactis subsp. cremoris (strain MG1363).